The primary structure comprises 571 residues: MSQPWPAAEIARVILDGFDDYREHFRRITLGARERFEQARWQDIQRAAAARINLYEEKVAEVNGWLRKGFEGQVLLDVEQWPLVKNAYIRLIDPRLDDELSETWYNSLFCSLFSHDQISDGCMFIHTTRPSMRVHERAAQTRTYALTDRLKGLLRAIFADYAFDVPYGDLEADLSRLEEQLRECLPDWVCKDPQLKIELFTPVLYRNKGAYLVGRLYTPDEQWPLVIPLLHREGHGIEADALITDEAEVSIIFSFTRSYFMVDVPVPGEFVNFLKRILPGKHIAELYTSIGFYKHGKSEFYRALINHLANSDDRFVMAPGVRGMVMSVFTLPGFNTVFKIIKDRFSPSKTVDRATVIEKYRLVKSVDRVGRMADTQEFADFRFPQGKFDPECLAELLEVAPSTVSLEGDTVLIRHCWTERRMTPLNLYLEHASEGQVLEALEDYGLAIKQLAAANIFPGDMLLKNFGVTRHGRVVFYDYDEISFLTEVNFRHIPPPRYPEDEMSGEPWYSIGPHDVFPEEFPPFLFADIGQRRLFSRLHGELYDADYWKGLQEAIRAGKVIDVFPYRRKSR.

Residues 318-324 (APGVRGM) and Lys-339 each bind ATP. The active site involves Asp-374.

This sequence belongs to the AceK family.

Its subcellular location is the cytoplasm. The enzyme catalyses L-seryl-[isocitrate dehydrogenase] + ATP = O-phospho-L-seryl-[isocitrate dehydrogenase] + ADP + H(+). In terms of biological role, bifunctional enzyme which can phosphorylate or dephosphorylate isocitrate dehydrogenase (IDH) on a specific serine residue. This is a regulatory mechanism which enables bacteria to bypass the Krebs cycle via the glyoxylate shunt in response to the source of carbon. When bacteria are grown on glucose, IDH is fully active and unphosphorylated, but when grown on acetate or ethanol, the activity of IDH declines drastically concomitant with its phosphorylation. This chain is Isocitrate dehydrogenase kinase/phosphatase, found in Pseudomonas entomophila (strain L48).